Here is a 431-residue protein sequence, read N- to C-terminus: Gamma-glutamyl phosphate reductase (431 aa).

This sequence belongs to the gamma-glutamyl phosphate reductase family.

It localises to the cytoplasm. The catalysed reaction is L-glutamate 5-semialdehyde + phosphate + NADP(+) = L-glutamyl 5-phosphate + NADPH + H(+). The protein operates within amino-acid biosynthesis; L-proline biosynthesis; L-glutamate 5-semialdehyde from L-glutamate: step 2/2. Catalyzes the NADPH-dependent reduction of L-glutamate 5-phosphate into L-glutamate 5-semialdehyde and phosphate. The product spontaneously undergoes cyclization to form 1-pyrroline-5-carboxylate. This is Gamma-glutamyl phosphate reductase from Bifidobacterium longum subsp. infantis (strain ATCC 15697 / DSM 20088 / JCM 1222 / NCTC 11817 / S12).